Here is a 155-residue protein sequence, read N- to C-terminus: Sec-independent protein translocase protein TatB (155 aa).

Residues 1-21 (MIDLGISKIALIGAVALIVIG) form a helical membrane-spanning segment. Disordered regions lie at residues 81-103 (ASDF…LPGF) and 131-155 (SGIR…SRKA). Residues 89-98 (SETTGSTSSD) show a composition bias toward polar residues.

It belongs to the TatB family. In terms of assembly, the Tat system comprises two distinct complexes: a TatABC complex, containing multiple copies of TatA, TatB and TatC subunits, and a separate TatA complex, containing only TatA subunits. Substrates initially bind to the TatABC complex, which probably triggers association of the separate TatA complex to form the active translocon.

The protein resides in the cell inner membrane. In terms of biological role, part of the twin-arginine translocation (Tat) system that transports large folded proteins containing a characteristic twin-arginine motif in their signal peptide across membranes. Together with TatC, TatB is part of a receptor directly interacting with Tat signal peptides. TatB may form an oligomeric binding site that transiently accommodates folded Tat precursor proteins before their translocation. This Polaromonas naphthalenivorans (strain CJ2) protein is Sec-independent protein translocase protein TatB.